Here is a 375-residue protein sequence, read N- to C-terminus: Succinyl-diaminopimelate desuccinylase (375 aa).

H66 provides a ligand contact to Zn(2+). D68 is an active-site residue. A Zn(2+)-binding site is contributed by D99. Residue E133 is the Proton acceptor of the active site. The Zn(2+) site is built by E134, E162, and H348.

It belongs to the peptidase M20A family. DapE subfamily. In terms of assembly, homodimer. Zn(2+) serves as cofactor. The cofactor is Co(2+).

It catalyses the reaction N-succinyl-(2S,6S)-2,6-diaminopimelate + H2O = (2S,6S)-2,6-diaminopimelate + succinate. Its pathway is amino-acid biosynthesis; L-lysine biosynthesis via DAP pathway; LL-2,6-diaminopimelate from (S)-tetrahydrodipicolinate (succinylase route): step 3/3. Catalyzes the hydrolysis of N-succinyl-L,L-diaminopimelic acid (SDAP), forming succinate and LL-2,6-diaminopimelate (DAP), an intermediate involved in the bacterial biosynthesis of lysine and meso-diaminopimelic acid, an essential component of bacterial cell walls. The sequence is that of Succinyl-diaminopimelate desuccinylase from Escherichia coli O1:K1 / APEC.